The following is a 244-amino-acid chain: Nuclear protein UL4 homolog (244 aa).

The disordered stretch occupies residues R193–F227. Over residues H205–S220 the composition is skewed to polar residues.

It belongs to the alphaherpesvirinae HHV-1 UL4 family.

The protein localises to the host nucleus. The chain is Nuclear protein UL4 homolog from Varicella-zoster virus (strain Dumas) (HHV-3).